Consider the following 55-residue polypeptide: uncharacterized protein (55 aa).

It is found in the plastid. This is an uncharacterized protein from Cuscuta reflexa (Southern Asian dodder).